The following is a 159-amino-acid chain: Ribosome-binding factor A (159 aa).

Residues 127-159 (TYAGEADPYRRPAVDDAGDSADDADPAEDERPS) are disordered. Residues 142–159 (DAGDSADDADPAEDERPS) show a composition bias toward acidic residues.

It belongs to the RbfA family. As to quaternary structure, monomer. Binds 30S ribosomal subunits, but not 50S ribosomal subunits or 70S ribosomes.

It localises to the cytoplasm. One of several proteins that assist in the late maturation steps of the functional core of the 30S ribosomal subunit. Associates with free 30S ribosomal subunits (but not with 30S subunits that are part of 70S ribosomes or polysomes). Required for efficient processing of 16S rRNA. May interact with the 5'-terminal helix region of 16S rRNA. The polypeptide is Ribosome-binding factor A (Beutenbergia cavernae (strain ATCC BAA-8 / DSM 12333 / CCUG 43141 / JCM 11478 / NBRC 16432 / NCIMB 13614 / HKI 0122)).